The primary structure comprises 616 residues: D-glutamate cyclase, mitochondrial (616 aa).

The N-terminal 28 residues, 1–28 (MPFTLHLRSRLPSAIRSLILQKKPNIRN), are a transit peptide targeting the mitochondrion.

This sequence belongs to the D-glutamate cyclase family.

The protein resides in the mitochondrion matrix. It catalyses the reaction D-glutamate = 5-oxo-D-proline + H2O. D-glutamate cyclase that converts D-glutamate to 5-oxo-D-proline. The chain is D-glutamate cyclase, mitochondrial from Homo sapiens (Human).